The primary structure comprises 401 residues: MPPILLTFLLFSNVYANFMNMLMGSSSAPLQQYRAYAGCSSSGCVPATIVPKSSGFWPNADMIAGLQTEQRSQNQNQNSNNPQQDDPRTSQSTGQINGNVPGSSSSNQQPVIYIARAGSDKYKNSEVTTSTPTPNGFNFGNGFQGGQNQNTGFSSGFFNNQNQNSNQNLNQNNFQQNQNLGASSGFFNNQNQQNSQQNQVNGPTSGFSNQQTSNQNSGFFNNQNQQNGQNFGNSGNQNGVNPYSGAFSNGQNQNQQGFFGNNQNNQQNSNGQVQGSQNNQIWNQNQNPNILPFGPNLVNSNTQFGPQPFQPIQVGSIRQPFSNKDWNFQPGGQAVQFVGGGGSGGAPGSQSVPMTDEAQQIAVQIQAIRDNLSITRNESNYLINQLKLSLPQELQNQLEMV.

Low complexity predominate over residues 70-84; it reads QRSQNQNQNSNNPQQ. Disordered regions lie at residues 70 to 109 and 122 to 303; these read QRSQ…SNQQ and YKNS…SNTQ. Composition is skewed to polar residues over residues 89–109 and 125–134; these read TSQS…SNQQ and SEVTTSTPTP. Composition is skewed to low complexity over residues 135–181, 188–239, and 247–289; these read NGFN…QNLG, NNQN…NQNG, and FSNG…QNPN.

As to expression, expressed in the pharyngeal glands.

This Caenorhabditis elegans protein is Prion-like-(Q/N-rich) domain-bearing protein 8 (pqn-8).